A 166-amino-acid chain; its full sequence is Deglycase PfpI (166 aa).

Residues 1 to 166 (MKILFLSANE…WMREFVKLLK (166 aa)) form the PfpI endopeptidase domain. The Nucleophile role is filled by cysteine 100. Histidine 101 is a catalytic residue.

Belongs to the peptidase C56 family. As to quaternary structure, homooligomer. Exists in two functional species: the predominant form is a homohexamer that comprises about 90% of the total activity, and the minor form is trimeric.

It localises to the cytoplasm. The enzyme catalyses N(omega)-(1-hydroxy-2-oxopropyl)-L-arginyl-[protein] + H2O = lactate + L-arginyl-[protein] + H(+). It carries out the reaction N(6)-(1-hydroxy-2-oxopropyl)-L-lysyl-[protein] + H2O = lactate + L-lysyl-[protein] + H(+). The catalysed reaction is S-(1-hydroxy-2-oxopropyl)-L-cysteinyl-[protein] + H2O = lactate + L-cysteinyl-[protein] + H(+). It catalyses the reaction N(omega)-(1-hydroxy-2-oxoethyl)-L-arginyl-[protein] + H2O = L-arginyl-[protein] + glycolate + H(+). The enzyme catalyses N(6)-(1-hydroxy-2-oxoethyl)-L-lysyl-[protein] + H2O = glycolate + L-lysyl-[protein] + H(+). It carries out the reaction S-(1-hydroxy-2-oxoethyl)-L-cysteinyl-[protein] + H2O = glycolate + L-cysteinyl-[protein] + H(+). Functionally, deglycase that catalyzes the deglycation of the Maillard adducts formed between amino groups of proteins and reactive carbonyl groups of glyoxals. Thus, functions as a protein deglycase that repairs methylglyoxal- and glyoxal-glycated proteins, and releases repaired proteins and lactate or glycolate, respectively. Deglycates cysteine, arginine and lysine residues in proteins, and thus reactivates these proteins by reversing glycation by glyoxals. Thus, was shown to afford full protection against glycation of thioredoxin by glyoxal. Acts on early glycation intermediates (hemithioacetals and aminocarbinols), preventing the formation of advanced glycation endproducts (AGE) that cause irreversible damage. Prevents acrylamide formation in asparagine/glyoxal and asparagine/sugar mixtures, likely by degrading asparagine/glyoxal Maillard adducts formed at high temperatures. Also displays proteolytic activity. Cleaves at the carboxyl side of both basic and hydrophobic residues in the P1 position, indicating trypsin- and chymotrypsin-like specificities. This chain is Deglycase PfpI, found in Pyrococcus furiosus (strain ATCC 43587 / DSM 3638 / JCM 8422 / Vc1).